The primary structure comprises 471 residues: DENN domain-containing protein 2D (471 aa).

The uDENN domain occupies 55–204; that stretch reads EYLLVVSLKK…AFPAPGKTVT (150 aa). Residues 226 to 359 form the cDENN domain; the sequence is HLEHVDFSSL…LQDDILDSLG (134 aa). A dDENN domain is found at 361 to 445; it reads GINELKTAEQ…QEAEKSKNPP (85 aa).

In terms of tissue distribution, in bronchial mucosa, mainly expressed in ciliated and basal epithelial cells and weakly in alveolar cells (at protein level). Tends to be down-regulated in lung cancers, immortalized bronchial epithelial cell lines and precancerous lesions.

The protein resides in the cytoplasm. In terms of biological role, guanine nucleotide exchange factor (GEF) which may activate RAB9A and RAB9B. Promotes the exchange of GDP to GTP, converting inactive GDP-bound Rab proteins into their active GTP-bound form. This is DENN domain-containing protein 2D (DENND2D) from Homo sapiens (Human).